Consider the following 62-residue polypeptide: Beta-defensin 110 (62 aa).

Positions 1–21 (MKIHLFFFILLFWVTILPARS) are cleaved as a signal peptide. Intrachain disulfides connect cysteine 32–cysteine 60, cysteine 39–cysteine 53, and cysteine 43–cysteine 61.

This sequence belongs to the beta-defensin family.

Its subcellular location is the secreted. Its function is as follows. Has antibacterial activity. The chain is Beta-defensin 110 (DEFB110) from Canis lupus familiaris (Dog).